We begin with the raw amino-acid sequence, 410 residues long: Dipeptidase 1 (410 aa).

A signal peptide spans 1–16 (MWTSWWLWPLVAVCTA). H36 and D38 together coordinate Zn(2+). N57 is a glycosylation site (N-linked (GlcNAc...) asparagine). A disulfide bridge links C87 with C170. E141 lines the Zn(2+) pocket. H168 is a substrate binding site. Zn(2+) contacts are provided by H214 and H235. C242 and C274 are joined by a disulfide. Residues R246 and D304 each coordinate substrate. A lipid anchor (GPI-anchor amidated serine) is attached at S384. A propeptide spans 385-410 (EAPSLHRRPGALLASLSLLLLSLGLL) (removed in mature form).

Belongs to the metallo-dependent hydrolases superfamily. Peptidase M19 family. In terms of assembly, homodimer; disulfide-linked. The cofactor is Zn(2+).

Its subcellular location is the apical cell membrane. It localises to the cell projection. The protein resides in the microvillus membrane. The catalysed reaction is an L-aminoacyl-L-amino acid + H2O = 2 an L-alpha-amino acid. It catalyses the reaction leukotriene D4 + H2O = leukotriene E4 + glycine. It carries out the reaction L-cystine-bis-glycine + 2 H2O = L-cystine + 2 glycine. The enzyme catalyses a beta-lactam + H2O = a substituted beta-amino acid. The catalysed reaction is glycyldehydrophenylalanine + H2O = 2,3-didehydrophenylalanine + glycine. With respect to regulation, inhibited by L-penicillamine. Beta-lactamase activity is inhibited by cilastatin. In terms of biological role, hydrolyzes a wide range of dipeptides including the conversion of leukotriene D4 to leukotriene E4. Hydrolyzes cystinyl-bis-glycine (cys-bis-gly) formed during glutathione degradation. Also possesses beta lactamase activity and hydrolytically inactivates beta-lactam antibiotics. Independently of its dipeptidase activity, acts as an adhesion receptor for neutrophil recruitment from bloodstream into inflamed lungs and liver. This is Dipeptidase 1 (DPEP1) from Oryctolagus cuniculus (Rabbit).